Here is a 342-residue protein sequence, read N- to C-terminus: 6-hydroxytryprostatin B O-methyltransferase (342 aa).

An S-adenosyl-L-methionine-binding site is contributed by aspartate 201. The active-site Proton acceptor is the histidine 244.

Belongs to the class I-like SAM-binding methyltransferase superfamily. Cation-independent O-methyltransferase family. As to quaternary structure, homodimer.

The catalysed reaction is 6-hydroxytryprostatin B + S-adenosyl-L-methionine = tryprostatin A + S-adenosyl-L-homocysteine + H(+). It participates in mycotoxin biosynthesis. In terms of biological role, 6-hydroxytryprostatin B O-methyltransferase; part of the gene cluster that mediates the biosynthesis of fumitremorgins, indole alkaloids that carry not only intriguing chemical structures, but also interesting biological and pharmacological activities. The biosynthesis of fumitremorgin-type alkaloids begins by condensation of the two amino acids L-tryptophan and L-proline to brevianamide F, catalyzed by the non-ribosomal peptide synthetase ftmA. Brevianamide F is then prenylated by the prenyltransferase ftmPT1/ftmB in the presence of dimethylallyl diphosphate, resulting in the formation of tryprostatin B. The three cytochrome P450 monooxygenases, ftmP450-1/ftmC, ftmP450-2/ftmE and ftmP450-3/FtmG, are responsible for the conversion of tryprostatin B to 6-hydroxytryprostatin B, tryprostatin A to fumitremorgin C and fumitremorgin C to 12,13-dihydroxyfumitremorgin C, respectively. The putative methyltransferase ftmMT/ftmD is expected for the conversion of 6-hydroxytryprostatin B to tryprostatin A. FtmPT2/FtmH catalyzes the prenylation of 12,13-dihydroxyfumitre-morgin C in the presence of dimethylallyl diphosphate, resulting in the formation of fumitremorgin B. Fumitremorgin B is further converted to verruculogen by ftmOx1/ftmF via the insertion of an endoperoxide bond between the two prenyl moieties. In some fungal species, verruculogen is further converted to fumitremorgin A, but the enzymes involved in this step have not been identified yet. The chain is 6-hydroxytryprostatin B O-methyltransferase from Aspergillus fumigatus (strain ATCC MYA-4609 / CBS 101355 / FGSC A1100 / Af293) (Neosartorya fumigata).